We begin with the raw amino-acid sequence, 418 residues long: Gamma-glutamyl phosphate reductase (418 aa).

This sequence belongs to the gamma-glutamyl phosphate reductase family.

Its subcellular location is the cytoplasm. The enzyme catalyses L-glutamate 5-semialdehyde + phosphate + NADP(+) = L-glutamyl 5-phosphate + NADPH + H(+). Its pathway is amino-acid biosynthesis; L-proline biosynthesis; L-glutamate 5-semialdehyde from L-glutamate: step 2/2. Its function is as follows. Catalyzes the NADPH-dependent reduction of L-glutamate 5-phosphate into L-glutamate 5-semialdehyde and phosphate. The product spontaneously undergoes cyclization to form 1-pyrroline-5-carboxylate. This is Gamma-glutamyl phosphate reductase from Chlorobium chlorochromatii (strain CaD3).